The chain runs to 954 residues: Glycine dehydrogenase (decarboxylating) (954 aa).

The residue at position 701 (lysine 701) is an N6-(pyridoxal phosphate)lysine.

Belongs to the GcvP family. The glycine cleavage system is composed of four proteins: P, T, L and H. It depends on pyridoxal 5'-phosphate as a cofactor.

It catalyses the reaction N(6)-[(R)-lipoyl]-L-lysyl-[glycine-cleavage complex H protein] + glycine + H(+) = N(6)-[(R)-S(8)-aminomethyldihydrolipoyl]-L-lysyl-[glycine-cleavage complex H protein] + CO2. In terms of biological role, the glycine cleavage system catalyzes the degradation of glycine. The P protein binds the alpha-amino group of glycine through its pyridoxal phosphate cofactor; CO(2) is released and the remaining methylamine moiety is then transferred to the lipoamide cofactor of the H protein. This Bordetella parapertussis (strain 12822 / ATCC BAA-587 / NCTC 13253) protein is Glycine dehydrogenase (decarboxylating).